A 1195-amino-acid polypeptide reads, in one-letter code: Voltage-gated inwardly rectifying potassium channel KCNH7 (1195 aa).

Over 1-412 the chain is Cytoplasmic; it reads MPVRRGHVAP…YSPFKAVWDW (412 aa). In terms of domain architecture, PAS spans 41–70; sequence IIYCNDGFCEMTGFSRPDVMQKPCTCDFLH. A PAC domain is found at 92–144; that stretch reads RKVEVTYYHKNGSTFICNTHIIPVKNQEGVAMMFIINFEYVTDEENAATPERV. S174 carries the phosphoserine modification. Residues 194-216 form a disordered region; the sequence is SVAMKHFKSPTKESCSPSEADDT. A phosphoserine mark is found at S238 and S319. A helical transmembrane segment spans residues 413–433; that stretch reads LILLLVIYTAIFTPYSAAFLL. Over 434-449 the chain is Extracellular; it reads NDREEQKRRECGYSCS. The chain crosses the membrane as a helical span at residues 450-470; sequence PLNVVDLIVDIMFIIDILINF. Residues 471-494 lie on the Cytoplasmic side of the membrane; the sequence is RTTYVNQNEEVVSDPAKIAIHYFK. Residues 495–515 form a helical membrane-spanning segment; that stretch reads GWFLIDMVAAIPFDLLIFGSG. Residues 516–521 are Extracellular-facing; the sequence is SDETTT. Residues 522 to 542 form a helical; Voltage-sensor membrane-spanning segment; the sequence is LIGLLKTARLLRLVRVARKLD. The Cytoplasmic portion of the chain corresponds to 543–549; sequence RYSEYGA. Residues 550-570 form a helical membrane-spanning segment; it reads AVLMLLMCIFALIAHWLACIW. At 571-614 the chain is on the extracellular side; sequence YAIGNVERPYLTDKIGWLDSLGTQIGKRYNDSDSSSGPSIKDKY. N600 carries an N-linked (GlcNAc...) asparagine glycan. The segment at residues 615 to 635 is an intramembrane region (pore-forming); it reads VTALYFTFSSLTSVGFGNVSP. A Selectivity filter motif is present at residues 627–632; the sequence is SVGFGN. Residues 636-641 lie on the Extracellular side of the membrane; sequence NTNSEK. Residues 642 to 662 traverse the membrane as a helical segment; the sequence is IFSICVMLIGSLMYASIFGNV. The Cytoplasmic portion of the chain corresponds to 663-1195; it reads SAIIQRLYSG…HVSDPGLPGK (533 aa). Residues 745–845 form a cNMP-binding domain region; that stretch reads AFRGASKGCL…IQREDLLEVL (101 aa). The interval 870–915 is disordered; the sequence is AKSQSVNDSEGDTGKLRRRRLSFESEGEKDFSKENSANDADDSTDT. Residues 890–902 are compositionally biased toward basic and acidic residues; sequence LSFESEGEKDFSK. 2 positions are modified to phosphoserine: S891 and S894. Residues 1027-1054 are a coiled coil; sequence YGEVEQRLDLLQEQLNRLESQMTTDIQA.

This sequence belongs to the potassium channel family. H (Eag) (TC 1.A.1.20) subfamily. Kv11.3/KCNH7 sub-subfamily. As to quaternary structure, the potassium channel is probably composed of a homo- or heterotetrameric complex of pore-forming alpha subunits that can associate only within their subfamily.

It localises to the cell membrane. It carries out the reaction K(+)(in) = K(+)(out). Pore-forming (alpha) subunit of voltage-gated inwardly rectifying potassium channel. Exhibits faster activation and deactivation kinetics and slow inactivation at membrane potentials positive to 240 mV, resulting in the weakest inward rectification. The protein is Voltage-gated inwardly rectifying potassium channel KCNH7 of Mus musculus (Mouse).